Here is a 447-residue protein sequence, read N- to C-terminus: Phosphoglucosamine mutase (447 aa).

Catalysis depends on Ser103, which acts as the Phosphoserine intermediate. Ser103, Asp242, Asp244, and Asp246 together coordinate Mg(2+). Ser103 is modified (phosphoserine).

This sequence belongs to the phosphohexose mutase family. Mg(2+) is required as a cofactor. In terms of processing, activated by phosphorylation.

It catalyses the reaction alpha-D-glucosamine 1-phosphate = D-glucosamine 6-phosphate. Catalyzes the conversion of glucosamine-6-phosphate to glucosamine-1-phosphate. This Cereibacter sphaeroides (strain ATCC 17025 / ATH 2.4.3) (Rhodobacter sphaeroides) protein is Phosphoglucosamine mutase.